A 404-amino-acid polypeptide reads, in one-letter code: Formate-dependent phosphoribosylglycinamide formyltransferase (404 aa).

Residues 25–26 and E85 each bind N(1)-(5-phospho-beta-D-ribosyl)glycinamide; that span reads EL. ATP-binding positions include R118, K159, 164–169, 199–202, and E207; these read SSGKGQ and EGFI. Residues 123–318 enclose the ATP-grasp domain; sequence RLAAEELGLP…EFELHARAIL (196 aa). Mg(2+)-binding residues include E277 and E289. N(1)-(5-phospho-beta-D-ribosyl)glycinamide is bound by residues D296, K365, and 372–373; that span reads RR.

The protein belongs to the PurK/PurT family. Homodimer.

It catalyses the reaction N(1)-(5-phospho-beta-D-ribosyl)glycinamide + formate + ATP = N(2)-formyl-N(1)-(5-phospho-beta-D-ribosyl)glycinamide + ADP + phosphate + H(+). It participates in purine metabolism; IMP biosynthesis via de novo pathway; N(2)-formyl-N(1)-(5-phospho-D-ribosyl)glycinamide from N(1)-(5-phospho-D-ribosyl)glycinamide (formate route): step 1/1. Functionally, involved in the de novo purine biosynthesis. Catalyzes the transfer of formate to 5-phospho-ribosyl-glycinamide (GAR), producing 5-phospho-ribosyl-N-formylglycinamide (FGAR). Formate is provided by PurU via hydrolysis of 10-formyl-tetrahydrofolate. In Burkholderia mallei (strain NCTC 10247), this protein is Formate-dependent phosphoribosylglycinamide formyltransferase.